Consider the following 118-residue polypeptide: Basic phospholipase A2 PA-13 (118 aa).

Disulfide bonds link Cys-11–Cys-71, Cys-27–Cys-117, Cys-29–Cys-45, Cys-44–Cys-98, Cys-51–Cys-91, Cys-60–Cys-84, and Cys-78–Cys-89. Ca(2+)-binding residues include Tyr-28, Gly-30, and Gly-32. Residue His-48 is part of the active site. Residue Asp-49 participates in Ca(2+) binding. Asp-92 is an active-site residue.

Belongs to the phospholipase A2 family. Group I subfamily. D49 sub-subfamily. Ca(2+) is required as a cofactor. Expressed by the venom gland.

It is found in the secreted. The catalysed reaction is a 1,2-diacyl-sn-glycero-3-phosphocholine + H2O = a 1-acyl-sn-glycero-3-phosphocholine + a fatty acid + H(+). In terms of biological role, PLA2 catalyzes the calcium-dependent hydrolysis of the 2-acyl groups in 3-sn-phosphoglycerides. The chain is Basic phospholipase A2 PA-13 from Pseudechis australis (Mulga snake).